The chain runs to 460 residues: Chromosomal replication initiator protein DnaA (460 aa).

The interval 1-73 (MEISIDSLWS…ANVVQSILGH (73 aa)) is domain I, interacts with DnaA modulators. Positions 73–116 (HPVEIYITVAKGEEFEEIGGGGAWELPTTNSIYETPNQNRQPNT) are domain II. A domain III, AAA+ region region spans residues 117 to 333 (ELNAKYVFSR…GALTRALAYI (217 aa)). Gly-161, Gly-163, Lys-164, and Thr-165 together coordinate ATP. The interval 334–460 (SIWGLPMTVA…MNSRSRKPSL (127 aa)) is domain IV, binds dsDNA.

The protein belongs to the DnaA family. As to quaternary structure, oligomerizes as a right-handed, spiral filament on DNA at oriC.

It localises to the cytoplasm. Functionally, plays an essential role in the initiation and regulation of chromosomal replication. ATP-DnaA binds to the origin of replication (oriC) to initiate formation of the DNA replication initiation complex once per cell cycle. Binds the DnaA box (a 9 base pair repeat at the origin) and separates the double-stranded (ds)DNA. Forms a right-handed helical filament on oriC DNA; dsDNA binds to the exterior of the filament while single-stranded (ss)DNA is stabiized in the filament's interior. The ATP-DnaA-oriC complex binds and stabilizes one strand of the AT-rich DNA unwinding element (DUE), permitting loading of DNA polymerase. After initiation quickly degrades to an ADP-DnaA complex that is not apt for DNA replication. Binds acidic phospholipids. The polypeptide is Chromosomal replication initiator protein DnaA (Trichormus variabilis (strain ATCC 29413 / PCC 7937) (Anabaena variabilis)).